The following is a 227-amino-acid chain: UPF0173 metal-dependent hydrolase Cmaq_1073 (227 aa).

It belongs to the UPF0173 family.

The protein is UPF0173 metal-dependent hydrolase Cmaq_1073 of Caldivirga maquilingensis (strain ATCC 700844 / DSM 13496 / JCM 10307 / IC-167).